The sequence spans 166 residues: NAD(P)H-quinone oxidoreductase subunit I, chloroplastic (166 aa).

4Fe-4S ferredoxin-type domains follow at residues 55-84 and 95-124; these read GRIHFEFDKCIACEVCVRVCPIDLPVVDWK and LNYSIDFGICIFCGNCVEYCPTNCLSMTEE. Positions 64, 67, 70, 74, 104, 107, 110, and 114 each coordinate [4Fe-4S] cluster.

Belongs to the complex I 23 kDa subunit family. In terms of assembly, NDH is composed of at least 16 different subunits, 5 of which are encoded in the nucleus. [4Fe-4S] cluster is required as a cofactor.

Its subcellular location is the plastid. The protein resides in the chloroplast thylakoid membrane. The enzyme catalyses a plastoquinone + NADH + (n+1) H(+)(in) = a plastoquinol + NAD(+) + n H(+)(out). It catalyses the reaction a plastoquinone + NADPH + (n+1) H(+)(in) = a plastoquinol + NADP(+) + n H(+)(out). NDH shuttles electrons from NAD(P)H:plastoquinone, via FMN and iron-sulfur (Fe-S) centers, to quinones in the photosynthetic chain and possibly in a chloroplast respiratory chain. The immediate electron acceptor for the enzyme in this species is believed to be plastoquinone. Couples the redox reaction to proton translocation, and thus conserves the redox energy in a proton gradient. The protein is NAD(P)H-quinone oxidoreductase subunit I, chloroplastic of Hulsea algida (Pacific hulsea).